The sequence spans 128 residues: Large-conductance mechanosensitive channel (128 aa).

The Cytoplasmic portion of the chain corresponds to 1-16; the sequence is MNFIKEFREFAMRGNV. The chain crosses the membrane as a helical span at residues 17–45; it reads VDMAVGVIIGSAFGKIVSSLVSDIFTPVL. At 46 to 74 the chain is on the periplasmic side; that stretch reads GILTGGIDFKDMKFVLAQAQGDVPAVTLN. A helical transmembrane segment spans residues 75-94; the sequence is YGLFIQNVIDFIIIAFAIFM. Topologically, residues 95-128 are cytoplasmic; sequence MIKVINKVRKPEEKKTAPKAETLLTEIRDLLKNK.

This sequence belongs to the MscL family. In terms of assembly, homopentamer.

It is found in the cell inner membrane. Channel that opens in response to stretch forces in the membrane lipid bilayer. Forms a nonselective ion channel with a conductance of about 4 nanosiemens. May participate in the regulation of osmotic pressure changes within the cell. This is Large-conductance mechanosensitive channel from Haemophilus influenzae (strain ATCC 51907 / DSM 11121 / KW20 / Rd).